The following is a 231-amino-acid chain: Protein OPG061 (231 aa).

The protein belongs to the orthopoxvirus OPG058 family.

It localises to the host nucleus. The protein resides in the host nucleolus. The polypeptide is Protein OPG061 (OPG061) (Variola virus).